Reading from the N-terminus, the 87-residue chain is Sodium channel neurotoxin MeuNaTxalpha-5* (87 aa).

Residues 1–19 (MNYLILISFALLVITGVES) form the signal peptide. The 65-residue stretch at 21-85 (RDAYIAKPHN…VPIRIPGKCH (65 aa)) folds into the LCN-type CS-alpha/beta domain. 4 cysteine pairs are disulfide-bonded: C31/C84, C35/C57, C43/C67, and C47/C69. A propeptide spans 86 to 87 (RR) (removed by a carboxypeptidase).

It belongs to the long (4 C-C) scorpion toxin superfamily. Sodium channel inhibitor family. Alpha subfamily. Expressed by the venom gland.

The protein resides in the secreted. Its function is as follows. Alpha toxins bind voltage-independently at site-3 of sodium channels (Nav) and inhibit the inactivation of the activated channels, thereby blocking neuronal transmission. This toxin inhibits inactivation of Nav1.6/SCN8A (EC(50)=790 nM) and drosophila DmNav1 (EC(50)=280 nM). The toxin (1 uM) does not significantly shift the midpoint of activation at the two channels, but induces a significant depolarizing shift in the V(1/2) of inactivation of the channels. Has antimicrobial activity. The polypeptide is Sodium channel neurotoxin MeuNaTxalpha-5* (Mesobuthus eupeus (Lesser Asian scorpion)).